The sequence spans 120 residues: NAD(P)H-quinone oxidoreductase subunit 3, chloroplastic (120 aa).

A run of 3 helical transmembrane segments spans residues isoleucine 9–glycine 29, methionine 64–methionine 84, and valine 88–leucine 108.

It belongs to the complex I subunit 3 family. As to quaternary structure, NDH is composed of at least 16 different subunits, 5 of which are encoded in the nucleus.

The protein resides in the plastid. It localises to the chloroplast thylakoid membrane. The enzyme catalyses a plastoquinone + NADH + (n+1) H(+)(in) = a plastoquinol + NAD(+) + n H(+)(out). It catalyses the reaction a plastoquinone + NADPH + (n+1) H(+)(in) = a plastoquinol + NADP(+) + n H(+)(out). Functionally, NDH shuttles electrons from NAD(P)H:plastoquinone, via FMN and iron-sulfur (Fe-S) centers, to quinones in the photosynthetic chain and possibly in a chloroplast respiratory chain. The immediate electron acceptor for the enzyme in this species is believed to be plastoquinone. Couples the redox reaction to proton translocation, and thus conserves the redox energy in a proton gradient. The protein is NAD(P)H-quinone oxidoreductase subunit 3, chloroplastic of Lactuca sativa (Garden lettuce).